The chain runs to 800 residues: Elongation factor G, mitochondrial (800 aa).

A mitochondrion-targeting transit peptide spans 1 to 34 (MSVHTVMRTQVRSLAGMPKAAMRPLGNSFCARRY). Residues 99-385 (SKVRNIGIAA…GICDYLPNPA (287 aa)) form the tr-type G domain. Residues 108 to 115 (AHIDSGKT), 183 to 187 (DTPGH), and 237 to 240 (NKMD) contribute to the GTP site.

It belongs to the TRAFAC class translation factor GTPase superfamily. Classic translation factor GTPase family. EF-G/EF-2 subfamily.

The protein resides in the mitochondrion. The protein operates within protein biosynthesis; polypeptide chain elongation. Its function is as follows. Mitochondrial GTPase that catalyzes the GTP-dependent ribosomal translocation step during translation elongation. During this step, the ribosome changes from the pre-translocational (PRE) to the post-translocational (POST) state as the newly formed A-site-bound peptidyl-tRNA and P-site-bound deacylated tRNA move to the P and E sites, respectively. Catalyzes the coordinated movement of the two tRNA molecules, the mRNA and conformational changes in the ribosome. This Coccidioides immitis (strain RS) (Valley fever fungus) protein is Elongation factor G, mitochondrial.